Reading from the N-terminus, the 372-residue chain is MSMVVQQEQEVVFDAAVLSGQTEIPSQFIWPAEESPGSVAVEELEVALIDVGAGAERSSVVRQVGEACERHGFFLVVNHGIEAALLEEAHRCMDAFFTLPLGEKQRAQRRAGESCGYASSFTGRFASKLPWKETLSFRYSSAGDEEGEEGVGEYLVRKLGAEHGRRLGEVYSRYCHEMSRLSLELMEVLGESLGIVGDRRHYFRRFFQRNDSIMRLNYYPACQRPLDTLGTGPHCDPTSLTILHQDHVGGLEVWAEGRWRAIRPRPGALVVNVGDTFMALSNARYRSCLHRAVVNSTAPRRSLAFFLCPEMDTVVRPPEELVDDHHPRVYPDFTWRALLDFTQRHYRADMRTLQAFSDWLNHHRHLQPTIYS.

The region spanning 209 to 309 (RNDSIMRLNY…RRSLAFFLCP (101 aa)) is the Fe2OG dioxygenase domain. Fe cation contacts are provided by His-234, Asp-236, and His-290. Residue Arg-300 is part of the active site.

It belongs to the iron/ascorbate-dependent oxidoreductase family. GA20OX subfamily. Fe(2+) serves as cofactor. It depends on L-ascorbate as a cofactor. In terms of tissue distribution, preferentially expressed in reproductive organs. Expressed in the epithelium of embryos and the tapetum of anthers. Expressed at low levels in the shoot apical meristem.

It carries out the reaction gibberellin A12 + 2 2-oxoglutarate + 3 O2 + H(+) = gibberellin A9 + 2 succinate + 3 CO2 + 2 H2O. The enzyme catalyses gibberellin A53 + 2 2-oxoglutarate + 3 O2 + H(+) = gibberellin A20 + 2 succinate + 3 CO2 + 2 H2O. In terms of biological role, key oxidase enzyme in the biosynthesis of gibberellin. Catalyzes the conversion of GA12 and GA53 to GA9 and GA20 respectively, via a three-step oxidation at C-20 of the GA skeleton. The protein is Gibberellin 20 oxidase 1 of Oryza sativa subsp. japonica (Rice).